Consider the following 217-residue polypeptide: Salivary glue protein Sgs-3 (217 aa).

Residues 1–23 form the signal peptide; sequence MKLTIATVLASILLIGFANVANC. The span at 45–130 shows a compositional bias: low complexity; it reads KSTSTTTTTT…KPTTHSTPKT (86 aa). The segment at 45-163 is disordered; that stretch reads KSTSTTTTTT…KHTTPTTTTT (119 aa). A compositionally biased stretch (basic residues) spans 131–154; it reads KPTKHTTPKTKPTKHTTPKTKPTK.

The protein is Salivary glue protein Sgs-3 (Sgs3) of Drosophila simulans (Fruit fly).